The chain runs to 120 residues: Small ribosomal subunit protein eS24 (120 aa).

The segment at arginine 101–glycine 120 is disordered.

Belongs to the eukaryotic ribosomal protein eS24 family.

The chain is Small ribosomal subunit protein eS24 from Saccharolobus solfataricus (strain ATCC 35092 / DSM 1617 / JCM 11322 / P2) (Sulfolobus solfataricus).